The following is a 261-amino-acid chain: Probable electron transfer flavoprotein subunit beta (261 aa).

Serine 2 is modified (N-acetylserine).

This sequence belongs to the ETF beta-subunit/FixA family. As to quaternary structure, heterodimer of an alpha and a beta subunit. Interacts with YFH1. The cofactor is FAD. It depends on AMP as a cofactor.

It is found in the mitochondrion matrix. The electron transfer flavoprotein serves as a specific electron acceptor for several dehydrogenases, including five acyl-CoA dehydrogenases, glutaryl-CoA and sarcosine dehydrogenase. It transfers the electrons to the main mitochondrial respiratory chain via ETF-ubiquinone oxidoreductase (ETF dehydrogenase). This chain is Probable electron transfer flavoprotein subunit beta (CIR1), found in Saccharomyces cerevisiae (strain ATCC 204508 / S288c) (Baker's yeast).